Here is a 510-residue protein sequence, read N- to C-terminus: Histidine ammonia-lyase (510 aa).

The 5-imidazolinone (Ala-Gly) cross-link spans 143–145 (ASG). Serine 144 is modified (2,3-didehydroalanine (Ser)).

Belongs to the PAL/histidase family. In terms of processing, contains an active site 4-methylidene-imidazol-5-one (MIO), which is formed autocatalytically by cyclization and dehydration of residues Ala-Ser-Gly.

Its subcellular location is the cytoplasm. The catalysed reaction is L-histidine = trans-urocanate + NH4(+). It participates in amino-acid degradation; L-histidine degradation into L-glutamate; N-formimidoyl-L-glutamate from L-histidine: step 1/3. The chain is Histidine ammonia-lyase from Pseudomonas putida (strain ATCC 47054 / DSM 6125 / CFBP 8728 / NCIMB 11950 / KT2440).